A 142-amino-acid polypeptide reads, in one-letter code: Regulatory protein RecX (142 aa).

Belongs to the RecX family.

It localises to the cytoplasm. Modulates RecA activity. This is Regulatory protein RecX from Thermus thermophilus (strain ATCC BAA-163 / DSM 7039 / HB27).